The following is a 164-amino-acid chain: S-ribosylhomocysteine lyase (164 aa).

His-54, His-58, and Cys-128 together coordinate Fe cation.

The protein belongs to the LuxS family. In terms of assembly, homodimer. Requires Fe cation as cofactor.

The enzyme catalyses S-(5-deoxy-D-ribos-5-yl)-L-homocysteine = (S)-4,5-dihydroxypentane-2,3-dione + L-homocysteine. In terms of biological role, involved in the synthesis of autoinducer 2 (AI-2) which is secreted by bacteria and is used to communicate both the cell density and the metabolic potential of the environment. The regulation of gene expression in response to changes in cell density is called quorum sensing. Catalyzes the transformation of S-ribosylhomocysteine (RHC) to homocysteine (HC) and 4,5-dihydroxy-2,3-pentadione (DPD). This is S-ribosylhomocysteine lyase from Campylobacter jejuni subsp. jejuni serotype O:6 (strain 81116 / NCTC 11828).